A 142-amino-acid chain; its full sequence is Virulence-associated membrane protein 1 (142 aa).

An N-terminal signal peptide occupies residues 1 to 20 (MRGILVALTAALIFCSLTPA). A helical transmembrane segment spans residues 59–79 (IAIAVGTALVTLVSAGVGGML).

In terms of assembly, monomer.

Its subcellular location is the membrane. During infection, may play a role in establishing and maintaining biotrophy; the formation of a tight interaction zone between the host and the pathogen. This chain is Virulence-associated membrane protein 1, found in Mycosarcoma maydis (Corn smut fungus).